Consider the following 790-residue polypeptide: Threonine--tRNA ligase 2, cytoplasmic (790 aa).

The residue at position 2 (Ala-2) is an N-acetylalanine. Residues 13 to 68 (SRLQRQEEDIRWLCAEVQRLRDEQLRGPERGQAEGPRLTREVAQLQAENRDLHQRL) are a coiled coil. Positions 80–117 (RTEAGRAAAHEPPTQNQEKDTKKKRLKQSEPGREVKQP) are disordered. Basic and acidic residues predominate over residues 96–117 (QEKDTKKKRLKQSEPGREVKQP). A TGS domain is found at 148-210 (NVISVRVAGG…EGDSTVELLM (63 aa)). Ser-441 is subject to Phosphoserine. Positions 774–780 (KLKNLKK) match the Nuclear localization signal motif.

It belongs to the class-II aminoacyl-tRNA synthetase family. As to quaternary structure, may be a component of the multisynthetase complex (MSC), a large multi-subunit complex which contains at least eight different aminoacyl-tRNA synthetases plus three auxillary subunits AIMP1, AIMP2 and EEF1E1. Interacts with the MSC components EPRS1, AIMP1, AIMP2 and KARS1. As to expression, ubiquitous (at protein level). Strongly expressed in muscle (at protein level). Moderately expressed in heart and liver (at protein level). Weakly expressed in stomach, kidney, testis, spleen, brain, fat and lung (at protein level).

The protein localises to the cytoplasm. It localises to the nucleus. The catalysed reaction is tRNA(Thr) + L-threonine + ATP = L-threonyl-tRNA(Thr) + AMP + diphosphate + H(+). In terms of biological role, catalyzes the attachment of threonine to tRNA(Thr) in a two-step reaction: threonine is first activated by ATP to form Thr-AMP and then transferred to the acceptor end of tRNA(Thr). Also edits incorrectly charged tRNA(Thr) via its editing domain, at the post-transfer stage. The chain is Threonine--tRNA ligase 2, cytoplasmic (Tars3) from Mus musculus (Mouse).